The sequence spans 449 residues: Pentalenene oxygenase (449 aa).

A helical membrane pass occupies residues 251-273 (VITVMAAGTETVAGTLTWIFHLL). Residue Cys393 participates in heme binding.

It belongs to the cytochrome P450 family.

It localises to the membrane. It carries out the reaction pentalenene + 4 reduced [2Fe-2S]-[ferredoxin] + 2 O2 + 4 H(+) = pentalen-13-al + 4 oxidized [2Fe-2S]-[ferredoxin] + 3 H2O. It participates in antibiotic biosynthesis; neopentalenolactone biosynthesis. Its function is as follows. Catalyzes the conversion of pentalenene to pentalen-13-al by stepwise oxidation via pentalen-13-ol, a precursor of neopentalenolactone antibiotic. The chain is Pentalenene oxygenase (ptlI) from Streptomyces avermitilis (strain ATCC 31267 / DSM 46492 / JCM 5070 / NBRC 14893 / NCIMB 12804 / NRRL 8165 / MA-4680).